A 75-amino-acid chain; its full sequence is uncharacterized protein (75 aa).

Positions T3–E45 constitute a SpoVT-AbrB domain.

This sequence belongs to the VapB family.

This is an uncharacterized protein from Escherichia coli (strain K12).